Here is a 180-residue protein sequence, read N- to C-terminus: UPF0340 protein BLi03936/BL03990 (180 aa).

The protein belongs to the UPF0340 family.

The chain is UPF0340 protein BLi03936/BL03990 from Bacillus licheniformis (strain ATCC 14580 / DSM 13 / JCM 2505 / CCUG 7422 / NBRC 12200 / NCIMB 9375 / NCTC 10341 / NRRL NRS-1264 / Gibson 46).